The following is a 109-amino-acid chain: uncharacterized protein (109 aa).

Positions 1–23 are cleaved as a signal peptide; that stretch reads MKNYNFILISLFIIFFIILNISS. Asparagine 27 carries an N-linked (GlcNAc...) asparagine glycan. Positions 45 to 109 are disordered; the sequence is YQEYMENRTP…KKDQQNQQQN (65 aa). Low complexity predominate over residues 54–72; sequence PNEQQQQQQQQQNNNNPPQ. A compositionally biased stretch (basic and acidic residues) spans 94 to 103; the sequence is KLKEKLKKDQ.

The protein resides in the secreted. This is an uncharacterized protein from Dictyostelium discoideum (Social amoeba).